Reading from the N-terminus, the 59-residue chain is Chromatin protein Cren7 (59 aa).

This sequence belongs to the Cren7 family. As to quaternary structure, monomer. In terms of processing, methylated at multiple sites, to varying extents.

It is found in the chromosome. It localises to the cytoplasm. Functionally, a chromatin protein, binds double-stranded DNA without sequence specificity. Constrains negative DNA supercoils. This Pyrobaculum neutrophilum (strain DSM 2338 / JCM 9278 / NBRC 100436 / V24Sta) (Thermoproteus neutrophilus) protein is Chromatin protein Cren7.